The sequence spans 2293 residues: Protein Ycf2 (2293 aa).

1647 to 1654 is a binding site for ATP; that stretch reads GSIGTGRS.

It belongs to the Ycf2 family.

Its subcellular location is the plastid. It localises to the chloroplast stroma. Functionally, probable ATPase of unknown function. Its presence in a non-photosynthetic plant (Epifagus virginiana) and experiments in tobacco indicate that it has an essential function which is probably not related to photosynthesis. In Lobularia maritima (Sweet alyssum), this protein is Protein Ycf2.